The chain runs to 495 residues: Lanosterol 14-alpha demethylase erg11 (495 aa).

Residues 2 to 22 (AFSLVSILLSIALAWYVGYII) traverse the membrane as a helical segment. Residue Cys-442 coordinates heme.

This sequence belongs to the cytochrome P450 family. In terms of assembly, interacts with dap1. Heme is required as a cofactor.

It localises to the endoplasmic reticulum. The protein localises to the membrane. The enzyme catalyses a 14alpha-methyl steroid + 3 reduced [NADPH--hemoprotein reductase] + 3 O2 = a Delta(14) steroid + formate + 3 oxidized [NADPH--hemoprotein reductase] + 4 H2O + 4 H(+). It catalyses the reaction a 14alpha-methyl steroid + reduced [NADPH--hemoprotein reductase] + O2 = a 14alpha-hydroxymethyl steroid + oxidized [NADPH--hemoprotein reductase] + H2O + H(+). The catalysed reaction is a 14alpha-hydroxymethyl steroid + reduced [NADPH--hemoprotein reductase] + O2 = a 14alpha-formyl steroid + oxidized [NADPH--hemoprotein reductase] + 2 H2O + H(+). It carries out the reaction a 14alpha-formyl steroid + reduced [NADPH--hemoprotein reductase] + O2 = a Delta(14) steroid + formate + oxidized [NADPH--hemoprotein reductase] + H2O + 2 H(+). The enzyme catalyses lanosterol + 3 reduced [NADPH--hemoprotein reductase] + 3 O2 = 4,4-dimethyl-5alpha-cholesta-8,14,24-trien-3beta-ol + formate + 3 oxidized [NADPH--hemoprotein reductase] + 4 H2O + 4 H(+). It catalyses the reaction lanosterol + reduced [NADPH--hemoprotein reductase] + O2 = 32-hydroxylanosterol + oxidized [NADPH--hemoprotein reductase] + H2O + H(+). The catalysed reaction is 32-hydroxylanosterol + reduced [NADPH--hemoprotein reductase] + O2 = 32-oxolanosterol + oxidized [NADPH--hemoprotein reductase] + 2 H2O + H(+). It carries out the reaction 32-oxolanosterol + reduced [NADPH--hemoprotein reductase] + O2 = 4,4-dimethyl-5alpha-cholesta-8,14,24-trien-3beta-ol + formate + oxidized [NADPH--hemoprotein reductase] + H2O + 2 H(+). The enzyme catalyses eburicol + 3 reduced [NADPH--hemoprotein reductase] + 3 O2 = 14-demethyleburicol + formate + 3 oxidized [NADPH--hemoprotein reductase] + 4 H2O + 4 H(+). It catalyses the reaction eburicol + reduced [NADPH--hemoprotein reductase] + O2 = 32-hydroxyeburicol + oxidized [NADPH--hemoprotein reductase] + H2O + H(+). The catalysed reaction is 32-hydroxyeburicol + reduced [NADPH--hemoprotein reductase] + O2 = 32-oxoeburicol + oxidized [NADPH--hemoprotein reductase] + 2 H2O + H(+). It carries out the reaction 32-oxoeburicol + reduced [NADPH--hemoprotein reductase] + O2 = 14-demethyleburicol + formate + oxidized [NADPH--hemoprotein reductase] + H2O + 2 H(+). Its pathway is steroid biosynthesis; zymosterol biosynthesis; zymosterol from lanosterol: step 1/6. It participates in steroid metabolism; ergosterol biosynthesis. Functionally, sterol 14alpha-demethylase that plays a critical role in the third module of ergosterol biosynthesis pathway, being ergosterol the major sterol component in fungal membranes that participates in a variety of functions. The third module or late pathway involves the ergosterol synthesis itself through consecutive reactions that mainly occur in the endoplasmic reticulum (ER) membrane. In filamentous fungi, during the initial step of this module, lanosterol (lanosta-8,24-dien-3beta-ol) can be metabolized to eburicol. Sterol 14alpha-demethylase catalyzes the three-step oxidative removal of the 14alpha-methyl group (C-32) of both these sterols in the form of formate, and converts eburicol and lanosterol to 14-demethyleburicol (4,4,24-trimethylergosta-8,14,24(28)-trienol) and 4,4-dimethyl-5alpha-cholesta-8,14,24-trien-3beta-ol, respectively, which are further metabolized by other enzymes in the pathway to ergosterol. Can also use substrates not intrinsic to fungi, such as 24,25-dihydrolanosterol (DHL), producing 4,4-dimethyl-8,14-cholestadien-3-beta-ol, but at lower rates than the endogenous substrates. The protein is Lanosterol 14-alpha demethylase erg11 of Schizosaccharomyces pombe (strain 972 / ATCC 24843) (Fission yeast).